Here is a 129-residue protein sequence, read N- to C-terminus: MAWISLILSLLALSSGAISQAVVTQESALTTSPGETVTLTCRSSTGAVTTSNYANWVQQKPDHLFTGLIGGTNNRAPGVPARFSGSLIGNKAALTITGAQTEDEAIYFCALWYSNHWVFGGGTKLTVLG.

An N-terminal signal peptide occupies residues 1–19; sequence MAWISLILSLLALSSGAIS. Glutamine 20 carries the post-translational modification Pyrrolidone carboxylic acid. Residues 20–125 form the Ig-like domain; sequence QAVVTQESAL…HWVFGGGTKL (106 aa).

The protein is Ig lambda-1 chain V regions MOPC 104E/RPC20/J558/S104 of Mus musculus (Mouse).